The primary structure comprises 376 residues: Ribonucleoside-diphosphate reductase subunit beta (376 aa).

D85, E116, and H119 together coordinate Fe cation. Y123 is an active-site residue. Fe cation is bound by residues E205, E239, and H242.

The protein belongs to the ribonucleoside diphosphate reductase small chain family. In terms of assembly, tetramer of two alpha and two beta subunits. Fe cation is required as a cofactor.

It catalyses the reaction a 2'-deoxyribonucleoside 5'-diphosphate + [thioredoxin]-disulfide + H2O = a ribonucleoside 5'-diphosphate + [thioredoxin]-dithiol. Its function is as follows. Provides the precursors necessary for DNA synthesis. Catalyzes the biosynthesis of deoxyribonucleotides from the corresponding ribonucleotides. The chain is Ribonucleoside-diphosphate reductase subunit beta (nrdB) from Haemophilus influenzae (strain ATCC 51907 / DSM 11121 / KW20 / Rd).